A 237-amino-acid chain; its full sequence is MSSRQPLLDALGVELPDELLSLALTHRSYAYEHGGLPTNERLEFLGDAVLGLTITDALYHRHPDRTEGDLAKLRASVVNTQALADVARKLCDGGLGAHLLLGRGEANTGGADKSSILADGMESLLGAIYLQHGIDTAREVILRLFGALLDAAPTLGAGLDWKTSLQELTAARGMGAPSYLVTSTGPDHDKEFTAVVVVADTEYGTGVGRSKKEAEQKAAAATWKALDVLDSAAQTSA.

The 131-residue stretch at serine 3–glycine 133 folds into the RNase III domain. A Mg(2+)-binding site is contributed by glutamate 43. Aspartate 47 is a catalytic residue. Positions 119 and 122 each coordinate Mg(2+). Glutamate 122 is a catalytic residue. One can recognise a DRBM domain in the interval aspartate 160–valine 228.

It belongs to the ribonuclease III family. Homodimer. Mg(2+) is required as a cofactor.

The protein resides in the cytoplasm. It carries out the reaction Endonucleolytic cleavage to 5'-phosphomonoester.. In terms of biological role, digests double-stranded RNA. Involved in the processing of primary rRNA transcript to yield the immediate precursors to the large and small rRNAs (23S and 16S). Processes some mRNAs, and tRNAs when they are encoded in the rRNA operon. Processes pre-crRNA and tracrRNA of type II CRISPR loci if present in the organism. This Mycolicibacterium paratuberculosis (strain ATCC BAA-968 / K-10) (Mycobacterium paratuberculosis) protein is Ribonuclease 3.